Here is a 134-residue protein sequence, read N- to C-terminus: Phosphoribosyl-AMP cyclohydrolase (134 aa).

A Mg(2+)-binding site is contributed by aspartate 77. Position 78 (cysteine 78) interacts with Zn(2+). The Mg(2+) site is built by aspartate 79 and aspartate 81. The Zn(2+) site is built by cysteine 95 and cysteine 102.

Belongs to the PRA-CH family. Homodimer. Mg(2+) is required as a cofactor. It depends on Zn(2+) as a cofactor.

It localises to the cytoplasm. It catalyses the reaction 1-(5-phospho-beta-D-ribosyl)-5'-AMP + H2O = 1-(5-phospho-beta-D-ribosyl)-5-[(5-phospho-beta-D-ribosylamino)methylideneamino]imidazole-4-carboxamide. Its pathway is amino-acid biosynthesis; L-histidine biosynthesis; L-histidine from 5-phospho-alpha-D-ribose 1-diphosphate: step 3/9. Catalyzes the hydrolysis of the adenine ring of phosphoribosyl-AMP. This chain is Phosphoribosyl-AMP cyclohydrolase, found in Pseudomonas aeruginosa (strain UCBPP-PA14).